The chain runs to 700 residues: Chondroitinase-AC (700 aa).

Residues 1 to 22 (MKKLFVTCIVFFSILSPALLIA) form the signal peptide. Catalysis depends on residues histidine 225, tyrosine 234, and arginine 288. Serine 328 carries O-linked (Man...) serine glycosylation. The Ca(2+) site is built by glutamate 405, aspartate 407, aspartate 416, and tyrosine 417. A glycan (O-linked (Man...) serine) is linked at serine 455.

The protein belongs to the polysaccharide lyase 8 family. As to quaternary structure, monomer. Requires Ca(2+) as cofactor.

The catalysed reaction is Eliminative degradation of polysaccharides containing 1,4-beta-D-hexosaminyl and 1,3-beta-D-glucuronosyl linkages to disaccharides containing 4-deoxy-beta-D-gluc-4-enuronosyl groups.. The protein is Chondroitinase-AC (cslA) of Pedobacter heparinus (strain ATCC 13125 / DSM 2366 / CIP 104194 / JCM 7457 / NBRC 12017 / NCIMB 9290 / NRRL B-14731 / HIM 762-3).